The chain runs to 137 residues: DNA polymerase III subunit psi (137 aa).

It belongs to the DNA polymerase III psi/HolD chain family. As to quaternary structure, the DNA polymerase III holoenzyme complex contains at least 10 different subunits organized into 3 functionally essential subassemblies: the Pol III core, the beta sliding clamp processivity factor and the clamp-loading complex. The Pol III core (subunits alpha, epsilon and theta) contains the polymerase and the 3'-5' exonuclease proofreading activities. The polymerase is tethered to the template via the dimeric beta sliding clamp processivity factor. The clamp-loading complex (also called gamma complex) assembles the beta sliding clamp onto the primed template and plays a central role in the organization and communication at the replication fork. The clamp-loading complex contains delta, delta', psi and chi, and 3 copies of either or both of two different DnaX proteins, gamma and tau. The DNA replisome complex has a single clamp loader (3 tau and 1 each of delta, delta', psi and chi subunits) which binds 3 Pol III cores (1 core on the leading strand and 2 on the lagging strand) each with a beta sliding clamp dimer. Additional proteins in the replisome are other copies of gamma, psi (this protein) and chi (holC), SSB, DNA helicase and RNA primase. The clamp loader hydrolyzes ATP to assemble the beta processivity factor onto the primed template and plays a central role in the organization and communication at the replication fork. Interacts directly with the chi subunit (holC).

It carries out the reaction DNA(n) + a 2'-deoxyribonucleoside 5'-triphosphate = DNA(n+1) + diphosphate. Its function is as follows. Part of the beta sliding clamp loading complex, which hydrolyzes ATP to load the beta clamp onto primed DNA to form the DNA replication pre-initiation complex. DNA polymerase III is a complex, multichain enzyme responsible for most of the replicative synthesis in bacteria. This DNA polymerase also exhibits 3' to 5' exonuclease activity. This is DNA polymerase III subunit psi from Escherichia coli (strain K12).